The chain runs to 405 residues: SPbeta prophage-derived uncharacterized protein YomR (405 aa).

Positions 9 to 36 form a coiled coil; sequence QLKQNNIQINSLRGSNDRAEKHMLEHEQ.

The polypeptide is SPbeta prophage-derived uncharacterized protein YomR (yomR) (Bacillus subtilis (strain 168)).